Here is a 333-residue protein sequence, read N- to C-terminus: 4-hydroxy-3-methylbut-2-enyl diphosphate reductase (333 aa).

Cys-20 provides a ligand contact to [4Fe-4S] cluster. (2E)-4-hydroxy-3-methylbut-2-enyl diphosphate contacts are provided by His-49 and His-82. Residues His-49 and His-82 each contribute to the dimethylallyl diphosphate site. His-49 and His-82 together coordinate isopentenyl diphosphate. Cys-104 serves as a coordination point for [4Fe-4S] cluster. Position 132 (His-132) interacts with (2E)-4-hydroxy-3-methylbut-2-enyl diphosphate. Residue His-132 coordinates dimethylallyl diphosphate. His-132 lines the isopentenyl diphosphate pocket. Catalysis depends on Glu-134, which acts as the Proton donor. Thr-172 lines the (2E)-4-hydroxy-3-methylbut-2-enyl diphosphate pocket. A [4Fe-4S] cluster-binding site is contributed by Cys-202. (2E)-4-hydroxy-3-methylbut-2-enyl diphosphate contacts are provided by Ser-230, Ser-231, Asn-232, and Ser-274. Ser-230, Ser-231, Asn-232, and Ser-274 together coordinate dimethylallyl diphosphate. Positions 230, 231, 232, and 274 each coordinate isopentenyl diphosphate.

The protein belongs to the IspH family. The cofactor is [4Fe-4S] cluster.

The enzyme catalyses isopentenyl diphosphate + 2 oxidized [2Fe-2S]-[ferredoxin] + H2O = (2E)-4-hydroxy-3-methylbut-2-enyl diphosphate + 2 reduced [2Fe-2S]-[ferredoxin] + 2 H(+). It catalyses the reaction dimethylallyl diphosphate + 2 oxidized [2Fe-2S]-[ferredoxin] + H2O = (2E)-4-hydroxy-3-methylbut-2-enyl diphosphate + 2 reduced [2Fe-2S]-[ferredoxin] + 2 H(+). Its pathway is isoprenoid biosynthesis; dimethylallyl diphosphate biosynthesis; dimethylallyl diphosphate from (2E)-4-hydroxy-3-methylbutenyl diphosphate: step 1/1. The protein operates within isoprenoid biosynthesis; isopentenyl diphosphate biosynthesis via DXP pathway; isopentenyl diphosphate from 1-deoxy-D-xylulose 5-phosphate: step 6/6. Functionally, catalyzes the conversion of 1-hydroxy-2-methyl-2-(E)-butenyl 4-diphosphate (HMBPP) into a mixture of isopentenyl diphosphate (IPP) and dimethylallyl diphosphate (DMAPP). Acts in the terminal step of the DOXP/MEP pathway for isoprenoid precursor biosynthesis. In Polaromonas sp. (strain JS666 / ATCC BAA-500), this protein is 4-hydroxy-3-methylbut-2-enyl diphosphate reductase.